A 339-amino-acid chain; its full sequence is D-alanine--D-alanine ligase (339 aa).

Residues 126–333 (KQVLDSAGIP…YSELVTRLVE (208 aa)) form the ATP-grasp domain. 158 to 213 (AAELGYPLFVKPANLGSSVGISKVGSPEELDAALTLAFGLDRRVILEAMTPHKPRE) provides a ligand contact to ATP. Positions 286, 300, and 302 each coordinate Mg(2+).

This sequence belongs to the D-alanine--D-alanine ligase family. It depends on Mg(2+) as a cofactor. Mn(2+) is required as a cofactor.

Its subcellular location is the cytoplasm. The enzyme catalyses 2 D-alanine + ATP = D-alanyl-D-alanine + ADP + phosphate + H(+). It participates in cell wall biogenesis; peptidoglycan biosynthesis. Functionally, cell wall formation. The polypeptide is D-alanine--D-alanine ligase (Deinococcus radiodurans (strain ATCC 13939 / DSM 20539 / JCM 16871 / CCUG 27074 / LMG 4051 / NBRC 15346 / NCIMB 9279 / VKM B-1422 / R1)).